The primary structure comprises 332 residues: Fructose-1,6-bisphosphatase class 1 (332 aa).

Residues glutamate 89, aspartate 110, leucine 112, and aspartate 113 each contribute to the Mg(2+) site. Residues 113–116 (DGSS), asparagine 206, tyrosine 239, 257–259 (YLY), and lysine 269 contribute to the substrate site. Glutamate 275 contacts Mg(2+).

This sequence belongs to the FBPase class 1 family. In terms of assembly, homotetramer. It depends on Mg(2+) as a cofactor.

The protein localises to the cytoplasm. It catalyses the reaction beta-D-fructose 1,6-bisphosphate + H2O = beta-D-fructose 6-phosphate + phosphate. It participates in carbohydrate biosynthesis; gluconeogenesis. This Salmonella arizonae (strain ATCC BAA-731 / CDC346-86 / RSK2980) protein is Fructose-1,6-bisphosphatase class 1.